A 438-amino-acid polypeptide reads, in one-letter code: Minor myo-inositol transporter IolF (438 aa).

Transmembrane regions (helical) follow at residues 15-35 (IAAALANYIDAGSIVAGSAGL), 49-69 (IGLLGALSANAISAAVGALLG), 86-106 (MLVYALGICLVLFGVNFPMLL), 108-128 (GYIIIGLSVGADITASWTIIA), 147-167 (WAAGAVVVLLLSVLAGDLGLL), 171-191 (IVFAHLLVIALITYILRIRLP), 230-250 (ILFLMGVYLVWNLAAGVMGFF), 268-288 (LLQMGLFIFTGLGVALIFMPF), 295-312 (TVFGIAAFMAVIGWTLFL), 317-334 (GLPILLLFIVVIGINNGA), 359-379 (LMFFLVRISIGIWSLFVPMII), and 387-407 (MAAILLGCVTASMIIGLLFAP).

It belongs to the major facilitator superfamily. Sugar transporter (TC 2.A.1.1) family.

Its subcellular location is the cell membrane. Its pathway is polyol metabolism; myo-inositol degradation into acetyl-CoA. Functionally, minor myo-inositol uptake transporter. The sequence is that of Minor myo-inositol transporter IolF (iolF) from Bacillus subtilis (strain 168).